Consider the following 585-residue polypeptide: Lipoprotein LpqB (585 aa).

Residues 1–17 (MGRKLLGLLMLAVLLAG) form the signal peptide. A lipid anchor (N-palmitoyl cysteine) is attached at Cys-18. Cys-18 carries S-diacylglycerol cysteine lipidation. Disordered regions lie at residues 24–48 (SSAP…TPGM) and 560–585 (PSAD…VLPG).

Belongs to the LpqB lipoprotein family.

Its subcellular location is the cell membrane. The sequence is that of Lipoprotein LpqB from Mycolicibacterium paratuberculosis (strain ATCC BAA-968 / K-10) (Mycobacterium paratuberculosis).